We begin with the raw amino-acid sequence, 214 residues long: Urease accessory protein UreG (214 aa).

23-30 is a GTP binding site; it reads GPVGSGKT.

Belongs to the SIMIBI class G3E GTPase family. UreG subfamily. As to quaternary structure, homodimer. UreD, UreF and UreG form a complex that acts as a GTP-hydrolysis-dependent molecular chaperone, activating the urease apoprotein by helping to assemble the nickel containing metallocenter of UreC. The UreE protein probably delivers the nickel.

The protein localises to the cytoplasm. Facilitates the functional incorporation of the urease nickel metallocenter. This process requires GTP hydrolysis, probably effectuated by UreG. The chain is Urease accessory protein UreG from Bordetella pertussis (strain Tohama I / ATCC BAA-589 / NCTC 13251).